The chain runs to 511 residues: Glucans biosynthesis protein G (511 aa).

The N-terminal stretch at 1-22 (MMKMRWLSAAVMLTLYTSSSWA) is a signal peptide.

The protein belongs to the OpgD/OpgG family.

The protein localises to the periplasm. It participates in glycan metabolism; osmoregulated periplasmic glucan (OPG) biosynthesis. In terms of biological role, involved in the biosynthesis of osmoregulated periplasmic glucans (OPGs). This chain is Glucans biosynthesis protein G, found in Escherichia fergusonii (strain ATCC 35469 / DSM 13698 / CCUG 18766 / IAM 14443 / JCM 21226 / LMG 7866 / NBRC 102419 / NCTC 12128 / CDC 0568-73).